Here is a 504-residue protein sequence, read N- to C-terminus: AMP phosphorylase 1 (504 aa).

Residues G169, 195-200, and T204 contribute to the AMP site; that span reads SRAITS. Residue D257 is the Proton donor of the active site. Residues S265 and K289 each contribute to the AMP site.

The protein belongs to the thymidine/pyrimidine-nucleoside phosphorylase family. Type 2 subfamily.

It carries out the reaction AMP + phosphate = alpha-D-ribose 1,5-bisphosphate + adenine. The catalysed reaction is CMP + phosphate = cytosine + alpha-D-ribose 1,5-bisphosphate. It catalyses the reaction UMP + phosphate = alpha-D-ribose 1,5-bisphosphate + uracil. Catalyzes the conversion of AMP and phosphate to adenine and ribose 1,5-bisphosphate (R15P). Exhibits phosphorylase activity toward CMP and UMP in addition to AMP. Functions in an archaeal AMP degradation pathway, together with R15P isomerase and RubisCO. In Archaeoglobus fulgidus (strain ATCC 49558 / DSM 4304 / JCM 9628 / NBRC 100126 / VC-16), this protein is AMP phosphorylase 1.